The following is a 90-amino-acid chain: Small ribosomal subunit protein mS37 (90 aa).

Residues cysteine 27 and cysteine 58 are joined by a disulfide bond.

This sequence belongs to the mitochondrion-specific ribosomal protein mS37 family. In terms of assembly, component of the mitochondrial small ribosomal subunit (mt-SSU). Mature N.crassa 74S mitochondrial ribosomes consist of a small (37S) and a large (54S) subunit. The 37S small subunit contains a 16S ribosomal RNA (16S mt-rRNA) and 32 different proteins. The 54S large subunit contains a 23S rRNA (23S mt-rRNA) and 42 different proteins.

The protein resides in the mitochondrion. Its function is as follows. Component of the mitochondrial ribosome (mitoribosome), a dedicated translation machinery responsible for the synthesis of mitochondrial genome-encoded proteins, including at least some of the essential transmembrane subunits of the mitochondrial respiratory chain. The mitoribosomes are attached to the mitochondrial inner membrane and translation products are cotranslationally integrated into the membrane. The polypeptide is Small ribosomal subunit protein mS37 (mrp10) (Neurospora crassa (strain ATCC 24698 / 74-OR23-1A / CBS 708.71 / DSM 1257 / FGSC 987)).